The chain runs to 516 residues: Histidine ammonia-lyase (516 aa).

The 5-imidazolinone (Ala-Gly) cross-link spans 143 to 145; it reads ASG. S144 bears the 2,3-didehydroalanine (Ser) mark.

It belongs to the PAL/histidase family. Post-translationally, contains an active site 4-methylidene-imidazol-5-one (MIO), which is formed autocatalytically by cyclization and dehydration of residues Ala-Ser-Gly.

The protein localises to the cytoplasm. It carries out the reaction L-histidine = trans-urocanate + NH4(+). The protein operates within amino-acid degradation; L-histidine degradation into L-glutamate; N-formimidoyl-L-glutamate from L-histidine: step 1/3. The protein is Histidine ammonia-lyase of Koribacter versatilis (strain Ellin345).